We begin with the raw amino-acid sequence, 186 residues long: Ribosome-recycling factor (186 aa).

It belongs to the RRF family.

It localises to the cytoplasm. In terms of biological role, responsible for the release of ribosomes from messenger RNA at the termination of protein biosynthesis. May increase the efficiency of translation by recycling ribosomes from one round of translation to another. This Rickettsia africae (strain ESF-5) protein is Ribosome-recycling factor.